The following is a 411-amino-acid chain: L-cysteine:1D-myo-inositol 2-amino-2-deoxy-alpha-D-glucopyranoside ligase (411 aa).

Cysteine 43 lines the Zn(2+) pocket. L-cysteinyl-5'-AMP-binding positions include 43 to 46, threonine 58, and 81 to 83; these read CGIT and NVT. The 'HIGH' region motif lies at 45–55; it reads ITPYDATHLGH. A 'ERGGDP' region motif is present at residues 186 to 191; it reads QRGGDP. Residue tryptophan 226 coordinates L-cysteinyl-5'-AMP. Residue cysteine 230 participates in Zn(2+) binding. 248–250 contacts L-cysteinyl-5'-AMP; the sequence is GSD. Histidine 255 provides a ligand contact to Zn(2+). Residue isoleucine 282 coordinates L-cysteinyl-5'-AMP. A 'KMSKS' region motif is present at residues 288–292; the sequence is KMSKS.

Belongs to the class-I aminoacyl-tRNA synthetase family. MshC subfamily. As to quaternary structure, monomer. The cofactor is Zn(2+).

It catalyses the reaction 1D-myo-inositol 2-amino-2-deoxy-alpha-D-glucopyranoside + L-cysteine + ATP = 1D-myo-inositol 2-(L-cysteinylamino)-2-deoxy-alpha-D-glucopyranoside + AMP + diphosphate + H(+). Its function is as follows. Catalyzes the ATP-dependent condensation of GlcN-Ins and L-cysteine to form L-Cys-GlcN-Ins. The chain is L-cysteine:1D-myo-inositol 2-amino-2-deoxy-alpha-D-glucopyranoside ligase from Mycobacterium marinum (strain ATCC BAA-535 / M).